We begin with the raw amino-acid sequence, 321 residues long: ATP-dependent 6-phosphofructokinase (321 aa).

Residue glycine 12 coordinates ATP. Residues 22 to 26 and 55 to 60 contribute to the ADP site; these read RGVVR and RYSVSD. ATP contacts are provided by residues 73–74 and 103–106; these read RF and GDGS. Aspartate 104 is a binding site for Mg(2+). 127–129 provides a ligand contact to substrate; sequence TID. Aspartate 129 (proton acceptor) is an active-site residue. An ADP-binding site is contributed by arginine 156. Substrate is bound by residues arginine 164 and 171 to 173; that span reads MGR. ADP contacts are provided by residues 187–189, lysine 213, and 215–217; these read GCE and KRH. Substrate is bound by residues glutamate 224, arginine 245, and 251 to 254; that span reads HIQR.

The protein belongs to the phosphofructokinase type A (PFKA) family. ATP-dependent PFK group I subfamily. Prokaryotic clade 'B1' sub-subfamily. As to quaternary structure, homotetramer. Mg(2+) serves as cofactor.

The protein resides in the cytoplasm. The catalysed reaction is beta-D-fructose 6-phosphate + ATP = beta-D-fructose 1,6-bisphosphate + ADP + H(+). It participates in carbohydrate degradation; glycolysis; D-glyceraldehyde 3-phosphate and glycerone phosphate from D-glucose: step 3/4. Its activity is regulated as follows. Allosterically activated by ADP and other diphosphonucleosides, and allosterically inhibited by phosphoenolpyruvate. Its function is as follows. Catalyzes the phosphorylation of D-fructose 6-phosphate to fructose 1,6-bisphosphate by ATP, the first committing step of glycolysis. This Histophilus somni (strain 129Pt) (Haemophilus somnus) protein is ATP-dependent 6-phosphofructokinase.